Consider the following 154-residue polypeptide: 3-dehydroquinate dehydratase (154 aa).

Residue Tyr-23 is the Proton acceptor of the active site. Substrate contacts are provided by Asn-74, His-80, and Asp-87. Residue His-100 is the Proton donor of the active site. Residues 101–102 (LS) and Arg-111 each bind substrate.

The protein belongs to the type-II 3-dehydroquinase family. In terms of assembly, homododecamer.

It carries out the reaction 3-dehydroquinate = 3-dehydroshikimate + H2O. It participates in metabolic intermediate biosynthesis; chorismate biosynthesis; chorismate from D-erythrose 4-phosphate and phosphoenolpyruvate: step 3/7. Catalyzes a trans-dehydration via an enolate intermediate. This chain is 3-dehydroquinate dehydratase, found in Actinobacillus pleuropneumoniae serotype 5b (strain L20).